The primary structure comprises 370 residues: tRNA-specific 2-thiouridylase MnmA (370 aa).

ATP is bound by residues 6-13 and Leu-32; that span reads AMSGGVDS. Cys-101 (nucleophile) is an active-site residue. Cys-101 and Cys-193 form a disulfide bridge. Gly-125 provides a ligand contact to ATP. Positions 143-145 are interaction with tRNA; sequence KDQ. Cys-193 functions as the Cysteine persulfide intermediate in the catalytic mechanism.

It belongs to the MnmA/TRMU family.

It is found in the cytoplasm. It catalyses the reaction S-sulfanyl-L-cysteinyl-[protein] + uridine(34) in tRNA + AH2 + ATP = 2-thiouridine(34) in tRNA + L-cysteinyl-[protein] + A + AMP + diphosphate + H(+). Functionally, catalyzes the 2-thiolation of uridine at the wobble position (U34) of tRNA, leading to the formation of s(2)U34. In Rhodococcus erythropolis (strain PR4 / NBRC 100887), this protein is tRNA-specific 2-thiouridylase MnmA.